A 273-amino-acid chain; its full sequence is Protein N-terminal and lysine N-methyltransferase EFM7 (273 aa).

The tract at residues 1–32 (MSDIEDLASGGLFDEPKDFYKPEEQPGSDSYA) is disordered. Over residues 14–24 (DEPKDFYKPEE) the composition is skewed to basic and acidic residues. Residues Trp-65, 92 to 94 (GAG), Asp-114, Trp-161, and Ser-183 contribute to the S-adenosyl-L-methionine site.

Belongs to the class I-like SAM-binding methyltransferase superfamily. EFM7 family.

It localises to the cytoplasm. Functionally, S-adenosyl-L-methionine-dependent protein methyltransferase that trimethylates the N-terminal glycine 'Gly-2' of elongation factor 1-alpha, before also catalyzing the mono- and dimethylation of 'Lys-3'. The polypeptide is Protein N-terminal and lysine N-methyltransferase EFM7 (Yarrowia lipolytica (strain CLIB 122 / E 150) (Yeast)).